Here is a 573-residue protein sequence, read N- to C-terminus: 2-succinyl-5-enolpyruvyl-6-hydroxy-3-cyclohexene-1-carboxylate synthase (573 aa).

The protein belongs to the TPP enzyme family. MenD subfamily. As to quaternary structure, homodimer. The cofactor is Mg(2+). Mn(2+) is required as a cofactor. It depends on thiamine diphosphate as a cofactor.

It catalyses the reaction isochorismate + 2-oxoglutarate + H(+) = 5-enolpyruvoyl-6-hydroxy-2-succinyl-cyclohex-3-ene-1-carboxylate + CO2. It functions in the pathway quinol/quinone metabolism; 1,4-dihydroxy-2-naphthoate biosynthesis; 1,4-dihydroxy-2-naphthoate from chorismate: step 2/7. Its pathway is quinol/quinone metabolism; menaquinone biosynthesis. Its function is as follows. Catalyzes the thiamine diphosphate-dependent decarboxylation of 2-oxoglutarate and the subsequent addition of the resulting succinic semialdehyde-thiamine pyrophosphate anion to isochorismate to yield 2-succinyl-5-enolpyruvyl-6-hydroxy-3-cyclohexene-1-carboxylate (SEPHCHC). The sequence is that of 2-succinyl-5-enolpyruvyl-6-hydroxy-3-cyclohexene-1-carboxylate synthase from Shewanella baltica (strain OS195).